The chain runs to 601 residues: Alpha-terpineol synthase, chloroplastic (601 aa).

The N-terminal 47 residues, 1–47 (MSTISIHHVGILRNPLHSKSKRASINKPWSLSLPRSSSASRLVEPCR), are a transit peptide targeting the chloroplast. Mn(2+)-binding residues include D357 and D361. The DDXXD motif signature appears at 357-361 (DDVYD). 2 homodimerization regions span residues 363–369 (YGTLDEL) and 435–471 (EAEWYKSGYTPSLEEYLTIAKISIASLTILLSVELSL). Positions 499 and 507 each coordinate Mn(2+).

This sequence belongs to the terpene synthase family. In terms of assembly, homodimer. It depends on Mn(2+) as a cofactor. The cofactor is Mg(2+).

It is found in the plastid. Its subcellular location is the chloroplast. It catalyses the reaction (2E)-geranyl diphosphate + H2O = (S)-alpha-terpineol + diphosphate. It carries out the reaction (2E)-geranyl diphosphate + H2O = (R)-alpha-terpineol + diphosphate. It participates in secondary metabolite biosynthesis; terpenoid biosynthesis. Its function is as follows. Involved in the biosynthesis of phenolic monoterpenes natural products. Monoterpene synthase which catalyzes the conversion of geranyl diphosphate (GPP) to alpha-terpineol (isomer is not determined). This Thymus caespititius (Cretan thyme) protein is Alpha-terpineol synthase, chloroplastic.